A 92-amino-acid polypeptide reads, in one-letter code: MARSVWKGPFVDGYLLNKADAARASGRNEIIKIWSRRSTILPQFVGLTFGVYNGHKFLPVQVTENMVGHKFGEFSPTRTFPGHAADKKAKRG.

Belongs to the universal ribosomal protein uS19 family.

Its function is as follows. Protein S19 forms a complex with S13 that binds strongly to the 16S ribosomal RNA. This is Small ribosomal subunit protein uS19 from Granulibacter bethesdensis (strain ATCC BAA-1260 / CGDNIH1).